Reading from the N-terminus, the 311-residue chain is HPr kinase/phosphorylase (311 aa).

Catalysis depends on residues histidine 138 and lysine 159. 153 to 160 is an ATP binding site; the sequence is GSSGIGKS. Serine 160 contributes to the Mg(2+) binding site. Aspartate 177 serves as the catalytic Proton acceptor; for phosphorylation activity. Proton donor; for dephosphorylation activity. An important for the catalytic mechanism of both phosphorylation and dephosphorylation region spans residues 201–210; it reads LEIRGVGIIN. Glutamate 202 provides a ligand contact to Mg(2+). The active site involves arginine 243. Residues 264-269 form an important for the catalytic mechanism of dephosphorylation region; it reads PVRPGR.

This sequence belongs to the HPrK/P family. Homohexamer. Mg(2+) is required as a cofactor.

It carries out the reaction [HPr protein]-L-serine + ATP = [HPr protein]-O-phospho-L-serine + ADP + H(+). It catalyses the reaction [HPr protein]-O-phospho-L-serine + phosphate + H(+) = [HPr protein]-L-serine + diphosphate. Its function is as follows. Catalyzes the ATP- as well as the pyrophosphate-dependent phosphorylation of a specific serine residue in HPr, a phosphocarrier protein of the phosphoenolpyruvate-dependent sugar phosphotransferase system (PTS). HprK/P also catalyzes the pyrophosphate-producing, inorganic phosphate-dependent dephosphorylation (phosphorolysis) of seryl-phosphorylated HPr (P-Ser-HPr). The two antagonistic activities of HprK/P are regulated by several intracellular metabolites, which change their concentration in response to the absence or presence of rapidly metabolisable carbon sources (glucose, fructose, etc.) in the growth medium. Therefore, by controlling the phosphorylation state of HPr, HPrK/P is a sensor enzyme that plays a major role in the regulation of carbon metabolism and sugar transport: it mediates carbon catabolite repression (CCR), and regulates PTS-catalyzed carbohydrate uptake and inducer exclusion. The protein is HPr kinase/phosphorylase of Brevibacillus brevis (strain 47 / JCM 6285 / NBRC 100599).